A 161-amino-acid chain; its full sequence is 3-isopropylmalate dehydratase small subunit (161 aa).

This sequence belongs to the LeuD family. LeuD type 2 subfamily. Heterodimer of LeuC and LeuD.

It catalyses the reaction (2R,3S)-3-isopropylmalate = (2S)-2-isopropylmalate. It participates in amino-acid biosynthesis; L-leucine biosynthesis; L-leucine from 3-methyl-2-oxobutanoate: step 2/4. Catalyzes the isomerization between 2-isopropylmalate and 3-isopropylmalate, via the formation of 2-isopropylmaleate. In Clostridium beijerinckii (strain ATCC 51743 / NCIMB 8052) (Clostridium acetobutylicum), this protein is 3-isopropylmalate dehydratase small subunit.